Here is a 237-residue protein sequence, read N- to C-terminus: 2-C-methyl-D-erythritol 4-phosphate cytidylyltransferase (237 aa).

The protein belongs to the IspD/TarI cytidylyltransferase family. IspD subfamily. As to quaternary structure, homodimer.

The enzyme catalyses 2-C-methyl-D-erythritol 4-phosphate + CTP + H(+) = 4-CDP-2-C-methyl-D-erythritol + diphosphate. It participates in isoprenoid biosynthesis; isopentenyl diphosphate biosynthesis via DXP pathway; isopentenyl diphosphate from 1-deoxy-D-xylulose 5-phosphate: step 2/6. Functionally, catalyzes the formation of 4-diphosphocytidyl-2-C-methyl-D-erythritol from CTP and 2-C-methyl-D-erythritol 4-phosphate (MEP). This Pectobacterium atrosepticum (strain SCRI 1043 / ATCC BAA-672) (Erwinia carotovora subsp. atroseptica) protein is 2-C-methyl-D-erythritol 4-phosphate cytidylyltransferase.